The primary structure comprises 375 residues: DNA replication and repair protein RecF (375 aa).

30-37 (GKNAQGKT) serves as a coordination point for ATP.

Belongs to the RecF family.

Its subcellular location is the cytoplasm. Functionally, the RecF protein is involved in DNA metabolism; it is required for DNA replication and normal SOS inducibility. RecF binds preferentially to single-stranded, linear DNA. It also seems to bind ATP. This chain is DNA replication and repair protein RecF, found in Lactobacillus acidophilus (strain ATCC 700396 / NCK56 / N2 / NCFM).